The primary structure comprises 556 residues: Dihydroxy-acid dehydratase (556 aa).

Residue Asp78 participates in Mg(2+) binding. Cys119 provides a ligand contact to [2Fe-2S] cluster. Positions 120 and 121 each coordinate Mg(2+). Lys121 is modified (N6-carboxylysine). Cys191 is a [2Fe-2S] cluster binding site. Glu442 serves as a coordination point for Mg(2+). Catalysis depends on Ser468, which acts as the Proton acceptor.

Belongs to the IlvD/Edd family. Homodimer. Requires [2Fe-2S] cluster as cofactor. It depends on Mg(2+) as a cofactor.

The catalysed reaction is (2R)-2,3-dihydroxy-3-methylbutanoate = 3-methyl-2-oxobutanoate + H2O. It catalyses the reaction (2R,3R)-2,3-dihydroxy-3-methylpentanoate = (S)-3-methyl-2-oxopentanoate + H2O. The protein operates within amino-acid biosynthesis; L-isoleucine biosynthesis; L-isoleucine from 2-oxobutanoate: step 3/4. Its pathway is amino-acid biosynthesis; L-valine biosynthesis; L-valine from pyruvate: step 3/4. In terms of biological role, functions in the biosynthesis of branched-chain amino acids. Catalyzes the dehydration of (2R,3R)-2,3-dihydroxy-3-methylpentanoate (2,3-dihydroxy-3-methylvalerate) into 2-oxo-3-methylpentanoate (2-oxo-3-methylvalerate) and of (2R)-2,3-dihydroxy-3-methylbutanoate (2,3-dihydroxyisovalerate) into 2-oxo-3-methylbutanoate (2-oxoisovalerate), the penultimate precursor to L-isoleucine and L-valine, respectively. The protein is Dihydroxy-acid dehydratase of Clostridium beijerinckii (strain ATCC 51743 / NCIMB 8052) (Clostridium acetobutylicum).